A 236-amino-acid chain; its full sequence is Peptidase E (236 aa).

Catalysis depends on charge relay system residues S122, D137, and H159.

This sequence belongs to the peptidase S51 family.

Its subcellular location is the cytoplasm. The enzyme catalyses Dipeptidase E catalyzes the hydrolysis of dipeptides Asp-|-Xaa. It does not act on peptides with N-terminal Glu, Asn or Gln, nor does it cleave isoaspartyl peptides.. In terms of biological role, hydrolyzes dipeptides containing N-terminal aspartate residues. May play a role in allowing the cell to use peptide aspartate to spare carbon otherwise required for the synthesis of the aspartate family of amino acids. In Shewanella putrefaciens (strain CN-32 / ATCC BAA-453), this protein is Peptidase E.